The sequence spans 194 residues: Cytochrome b-245 light chain (194 aa).

Residues 2–7 lie on the Cytoplasmic side of the membrane; the sequence is GQIEWA. A helical transmembrane segment spans residues 8-30; the sequence is MWANEQALASGLILVAGGIVATA. Topologically, residues 31-35 are extracellular; sequence GRFTQ. A helical transmembrane segment spans residues 36-53; the sequence is WYFGTYAIAAGVLVCLLE. The Cytoplasmic portion of the chain corresponds to 54 to 69; that stretch reads YPRGSRAKGSTLERCG. Residues 70–80 lie within the membrane without spanning it; that stretch reads QRYLTAVLKLL. Residues 81 to 86 lie on the Cytoplasmic side of the membrane; it reads GPLSRN. A helical transmembrane segment spans residues 87–104; it reads YYFRAALHLALSVPAGFL. Residue Leu105 is a topological domain, extracellular. Residues 106-126 form a helical membrane-spanning segment; it reads ATILGTVCLVIASIIYLLAAV. Residues 127–194 lie on the Cytoplasmic side of the membrane; it reads RGEQWTPIEP…NPIPVTDEVV (68 aa). A disordered region spans residues 134–194; sequence IEPRPKERPQ…NPIPVTDEVV (61 aa). Phosphothreonine is present on Thr147. Residue Lys149 forms a Glycyl lysine isopeptide (Lys-Gly) (interchain with G-Cter in ubiquitin) linkage.

The protein belongs to the p22phox family. Component of the phagocyte NADPH oxidase core complex/cytochrome b558 complex, composed of CYBB (heavy chain (beta)) and CYBA (light chain (alpha)). Component of the phagocyte NADPH oxidase complex composed of an obligatory core heterodimer formed by the membrane proteins CYBA and CYBB and the cytosolic regulatory subunits NCF1/p47-phox, NCF2/p67-phox, NCF4/p40-phox and the small GTPase RAC1 or RAC2. Interacts with NCF1 (via SH3 domain). Interacts with SH3PXD2A. Interacts with DUOX1, DUOX2 and TPO. Interacts with NOX4; this interaction mediates superoxide generation. Interacts with calprotectin (S100A8/9). Interacts with GBP7. Interacts with NOXO1. Forms a heterodimer with NOX3 and is essential for activity and cell membrane localization of NOX3. Interacts with NOX1. In terms of processing, phosphorylation at Thr-147 enhances NADPH oxidase activity by promoting NCF1/p47-phox binding. Post-translationally, ubiquitinated at Lys-149 likely by RNF145.

It localises to the cell membrane. In terms of biological role, subunit of NADPH oxidase complexes that is required for the NADPH oxidase activity that generates, in various cell types, superoxide from molecular oxygen utilizing NADPH as an electron donor. Subunit of the phagocyte NADPH oxidase complex that mediates the transfer of electrons from cytosolic NADPH to O2 to produce the superoxide anion (O2(-)). In the activated complex, electrons are first transferred from NADPH to flavin adenine dinucleotide (FAD) and subsequently transferred via two heme molecules to molecular oxygen, producing superoxide through an outer-sphere reaction. Activation of the NADPH oxidase complex is initiated by the assembly of cytosolic subunits of the NADPH oxidase complex with the core NADPH oxidase complex to form a complex at the plasma membrane or phagosomal membrane. This activation process is initiated by phosphorylation dependent binding of the cytosolic NCF1/p47-phox subunit to the C-terminus of CYBA/p22-phox. Aassociates with NOX3 to form a functional NADPH oxidase constitutively generating superoxide. The protein is Cytochrome b-245 light chain of Oryctolagus cuniculus (Rabbit).